The primary structure comprises 87 residues: Small ribosomal subunit protein uS15c (87 aa).

Belongs to the universal ribosomal protein uS15 family. As to quaternary structure, part of the 30S ribosomal subunit.

It localises to the plastid. It is found in the chloroplast. In Illicium oligandrum (Star anise), this protein is Small ribosomal subunit protein uS15c (rps15).